A 173-amino-acid polypeptide reads, in one-letter code: Propanediol dehydratase small subunit (173 aa).

The protein belongs to the diol/glycerol dehydratase small subunit family. In terms of assembly, the propanediol dehydratase enzyme is a heterotrimeric complex composed of a large (PduC), a medium (PduD) and a small (PduE) subunit. Adenosylcob(III)alamin serves as cofactor.

It is found in the bacterial microcompartment. It catalyses the reaction propane-1,2-diol = propanal + H2O. The protein operates within polyol metabolism; 1,2-propanediol degradation. Inhibited by glycerol. Functionally, part of the PduCDE complex that catalyzes the dehydration of 1,2-propanediol (1,2-PD) to propionaldehyde. Required for S.typhimurium growth on 1,2-PD as the sole carbon and energy source. Localized in the bacterial microcompartment (BMC) dedicated to 1,2-PD degradation. In terms of biological role, the 1,2-PD-specific bacterial microcompartment (BMC) concentrates low levels of 1,2-PD catabolic enzymes, concentrates volatile reaction intermediates thus enhancing pathway flux and keeps the level of toxic, mutagenic propionaldehyde low. The protein is Propanediol dehydratase small subunit of Salmonella typhimurium (strain LT2 / SGSC1412 / ATCC 700720).